Reading from the N-terminus, the 314-residue chain is Beta-lactamase (314 aa).

The tat-type signal signal peptide spans 1 to 39; that stretch reads MHPSTSRPSRRTLLTATAGAALAAATLVPGTAHASSGGR. The interval 31–50 is disordered; that stretch reads TAHASSGGRGHGSGSVSDAE. S89 acts as the Acyl-ester intermediate in catalysis. 259-261 is a binding site for substrate; the sequence is KTG.

The protein belongs to the class-A beta-lactamase family. Post-translationally, predicted to be exported by the Tat system. The position of the signal peptide cleavage has been experimentally proven.

It carries out the reaction a beta-lactam + H2O = a substituted beta-amino acid. This chain is Beta-lactamase, found in Streptomyces albus G.